Consider the following 92-residue polypeptide: Small ribosomal subunit protein bS18 (92 aa).

Belongs to the bacterial ribosomal protein bS18 family. In terms of assembly, part of the 30S ribosomal subunit. Forms a tight heterodimer with protein bS6.

Functionally, binds as a heterodimer with protein bS6 to the central domain of the 16S rRNA, where it helps stabilize the platform of the 30S subunit. This chain is Small ribosomal subunit protein bS18, found in Caulobacter sp. (strain K31).